The sequence spans 243 residues: Probable transcriptional regulatory protein Patl_0550 (243 aa).

This sequence belongs to the TACO1 family.

The protein localises to the cytoplasm. This chain is Probable transcriptional regulatory protein Patl_0550, found in Pseudoalteromonas atlantica (strain T6c / ATCC BAA-1087).